The primary structure comprises 207 residues: Small ribosomal subunit protein uS4 (207 aa).

The tract at residues 31 to 55 (KCKLDSKPGQHGRTSGARTSDYGTQ) is disordered. The span at 42 to 53 (GRTSGARTSDYG) shows a compositional bias: polar residues. The S4 RNA-binding domain occupies 97-160 (SRLDNVVYRM…KKQARIIEAL (64 aa)).

Belongs to the universal ribosomal protein uS4 family. Part of the 30S ribosomal subunit. Contacts protein S5. The interaction surface between S4 and S5 is involved in control of translational fidelity.

Its function is as follows. One of the primary rRNA binding proteins, it binds directly to 16S rRNA where it nucleates assembly of the body of the 30S subunit. In terms of biological role, with S5 and S12 plays an important role in translational accuracy. This is Small ribosomal subunit protein uS4 from Burkholderia vietnamiensis (strain G4 / LMG 22486) (Burkholderia cepacia (strain R1808)).